The chain runs to 492 residues: Endoglycoceramidase I (492 aa).

Positions 1-14 (MRKTVVAFAAAIAA) are cleaved as a signal peptide. Cysteine 15 is lipidated: N-palmitoyl cysteine. Cysteine 15 carries the S-diacylglycerol cysteine lipid modification. Residues lysine 61, aspartate 62, 131–133 (HQD), and 213–214 (NE) contribute to the substrate site. Glutamate 214 (proton donor) is an active-site residue. Cysteine 224 and cysteine 229 form a disulfide bridge. The substrate site is built by asparagine 265, glutamine 298, and tyrosine 302. The cysteines at positions 294 and 313 are disulfide-linked. Glutamate 339 serves as the catalytic Nucleophile. Tryptophan 365 lines the substrate pocket. The interval 467-492 (NRPGSAGAEVPDGPIETSSSGSSGSS) is disordered.

Belongs to the glycosyl hydrolase 5 (cellulase A) family.

The protein resides in the secreted. It localises to the membrane. The enzyme catalyses an oligoglycosyl-(1-&gt;4)-beta-D-glucosyl-(1&lt;-&gt;1)-ceramide + H2O = an oligoglycosyl-(1-&gt;4)-D-glucose + an N-acyl-sphingoid base. It carries out the reaction a ganglioside GM3 + H2O = N-acetyl-alpha-neuraminosyl-(2-&gt;3)-beta-D-galactosyl-(1-&gt;4)-D-glucose + an N-acyl-sphingoid base. It catalyses the reaction a ganglioside GM1 + H2O = beta-D-Gal-(1-&gt;3)-beta-D-GalNAc-(1-&gt;4)-[alpha-Neu5Ac-(2-&gt;3)]-beta-D-Gal-(1-&gt;4)-D-Glc + an N-acyl-sphingoid base. The catalysed reaction is a ganglioside Fuc-GM1 + H2O = alpha-Fuc-(1-&gt;2)-beta-Gal-(1-&gt;3)-beta-GalNAc-(1-&gt;4)-[alpha-Neu5Ac-(2-&gt;3)]-beta-Gal-(1-&gt;4)-Glc + an N-acyl-sphingoid base. The enzyme catalyses a beta-D-galactosyl-(1-&gt;4)-beta-D-glucosyl-(1&lt;-&gt;1)-ceramide + H2O = lactose + an N-acyl-sphingoid base. Hydrolyzes glycosphingolipids; exhibits broad substrate specificity including monosialodihexosylganglioside (GM3), monosialotetrahexosylganglioside (GM1), fucosyl-GM1, lactosylceramide, globotriosylceramide, globotetraosylceramide, ganglioside GD1a, and ganglioside GD1b. No activity towards glucosylceramide and galactosylceramide. This chain is Endoglycoceramidase I, found in Rhodococcus hoagii (strain 103S) (Rhodococcus equi).